The sequence spans 698 residues: Protein SST2 (698 aa).

Residues 10-203 (ELSSKNFSRT…GAKPNVWSPT (194 aa)) form a fungal-DR region. At S252 the chain carries Phosphoserine. The DEP domain occupies 273-358 (SNAGIRLFEN…SRSSFFTLSK (86 aa)). Residue S408 is modified to Phosphoserine. The RGS domain occupies 420 to 689 (KLDYVLTDPG…TQSDVYKDAS (270 aa)). S539 carries the post-translational modification Phosphoserine; by MAPK. The disordered stretch occupies residues 545–586 (FPTNLYDPSPASAESAASSISSTEADTLGEPPEVSLKPSKNL). A compositionally biased stretch (low complexity) spans 551–570 (DPSPASAESAASSISSTEAD). A Phosphoserine modification is found at S587.

Post-translationally, phosphorylated by FUS3 and KSS1.

Its function is as follows. Desensitization to alpha-factor pheromone. Is involved in regulating the signaling pathway for responding to mating pheromone. This is Protein SST2 (SST2) from Saccharomyces cerevisiae (strain ATCC 204508 / S288c) (Baker's yeast).